The primary structure comprises 205 residues: Small ribosomal subunit protein uS4 (205 aa).

Residues 20–46 (WGRSKSPVNRREYGPGQHGQRRKGKLS) are disordered. The 64-residue stretch at 94-157 (RRLDAVVYRA…RQLTLVLEAS (64 aa)) folds into the S4 RNA-binding domain.

This sequence belongs to the universal ribosomal protein uS4 family. Part of the 30S ribosomal subunit. Contacts protein S5. The interaction surface between S4 and S5 is involved in control of translational fidelity.

In terms of biological role, one of the primary rRNA binding proteins, it binds directly to 16S rRNA where it nucleates assembly of the body of the 30S subunit. Its function is as follows. With S5 and S12 plays an important role in translational accuracy. This chain is Small ribosomal subunit protein uS4, found in Beijerinckia indica subsp. indica (strain ATCC 9039 / DSM 1715 / NCIMB 8712).